We begin with the raw amino-acid sequence, 448 residues long: UDP-N-acetylmuramoylalanine--D-glutamate ligase (448 aa).

116–122 (GSNAKST) contributes to the ATP binding site.

Belongs to the MurCDEF family.

It localises to the cytoplasm. It carries out the reaction UDP-N-acetyl-alpha-D-muramoyl-L-alanine + D-glutamate + ATP = UDP-N-acetyl-alpha-D-muramoyl-L-alanyl-D-glutamate + ADP + phosphate + H(+). The protein operates within cell wall biogenesis; peptidoglycan biosynthesis. In terms of biological role, cell wall formation. Catalyzes the addition of glutamate to the nucleotide precursor UDP-N-acetylmuramoyl-L-alanine (UMA). This is UDP-N-acetylmuramoylalanine--D-glutamate ligase from Pseudomonas fluorescens (strain Pf0-1).